Reading from the N-terminus, the 642-residue chain is Restriction of telomere capping protein 5 (642 aa).

The segment at 143–186 is disordered; that stretch reads RRGAGQPPDENADNKEEDKSSTAKSHATGFAVDDPANDNYEDDE. Positions 154–163 are enriched in basic and acidic residues; that stretch reads ADNKEEDKSS. The segment covering 177-186 has biased composition (acidic residues); the sequence is PANDNYEDDE. The 219-residue stretch at 353–571 folds into the TLDc domain; the sequence is TILKPSAISH…IYTLEVWGLV (219 aa).

Belongs to the RTC5 family.

It localises to the cytoplasm. Its function is as follows. May be involved in a process influencing telomere capping. The polypeptide is Restriction of telomere capping protein 5 (rtc5) (Aspergillus clavatus (strain ATCC 1007 / CBS 513.65 / DSM 816 / NCTC 3887 / NRRL 1 / QM 1276 / 107)).